The following is a 205-amino-acid chain: Holliday junction branch migration complex subunit RuvA (205 aa).

Residues 1–63 (MIDFVEGTLS…EDAILLYGFA (63 aa)) are domain I. Residues 64–142 (TRDERDLFRK…GYTPSAILTV (79 aa)) are domain II. The segment at 143–153 (AAGDLTAGEQA) is flexible linker. The domain III stretch occupies residues 153–205 (AVSALNEALDALTALGYSDGELQKIRNTLSEKSKEGDGVEKLIKQGLALLMRG).

It belongs to the RuvA family. Homotetramer. Forms an RuvA(8)-RuvB(12)-Holliday junction (HJ) complex. HJ DNA is sandwiched between 2 RuvA tetramers; dsDNA enters through RuvA and exits via RuvB. An RuvB hexamer assembles on each DNA strand where it exits the tetramer. Each RuvB hexamer is contacted by two RuvA subunits (via domain III) on 2 adjacent RuvB subunits; this complex drives branch migration. In the full resolvosome a probable DNA-RuvA(4)-RuvB(12)-RuvC(2) complex forms which resolves the HJ.

It localises to the cytoplasm. Functionally, the RuvA-RuvB-RuvC complex processes Holliday junction (HJ) DNA during genetic recombination and DNA repair, while the RuvA-RuvB complex plays an important role in the rescue of blocked DNA replication forks via replication fork reversal (RFR). RuvA specifically binds to HJ cruciform DNA, conferring on it an open structure. The RuvB hexamer acts as an ATP-dependent pump, pulling dsDNA into and through the RuvAB complex. HJ branch migration allows RuvC to scan DNA until it finds its consensus sequence, where it cleaves and resolves the cruciform DNA. The sequence is that of Holliday junction branch migration complex subunit RuvA from Brevibacillus brevis (strain 47 / JCM 6285 / NBRC 100599).